The primary structure comprises 604 residues: Glutamyl-tRNA(Gln) amidotransferase subunit B, mitochondrial (604 aa).

The N-terminal 48 residues, 1-48 (MIRQCLSRRGAYSRYRLAARGVELAEPFHHQSSRPQGRRNWSSSPRCS), are a transit peptide targeting the mitochondrion. Positions 28-57 (FHHQSSRPQGRRNWSSSPRCSLDIRTDTPR) are disordered. The span at 33–46 (SRPQGRRNWSSSPR) shows a compositional bias: polar residues.

The protein belongs to the GatB/GatE family. GatB subfamily. Subunit of the heterotrimeric GatCAB amidotransferase (AdT) complex, composed of A, B and C subunits.

It localises to the mitochondrion. It carries out the reaction L-glutamyl-tRNA(Gln) + L-glutamine + ATP + H2O = L-glutaminyl-tRNA(Gln) + L-glutamate + ADP + phosphate + H(+). Allows the formation of correctly charged Gln-tRNA(Gln) through the transamidation of misacylated Glu-tRNA(Gln) in the mitochondria. The reaction takes place in the presence of glutamine and ATP through an activated gamma-phospho-Glu-tRNA(Gln). The chain is Glutamyl-tRNA(Gln) amidotransferase subunit B, mitochondrial from Blastomyces gilchristii (strain SLH14081) (Blastomyces dermatitidis).